A 432-amino-acid polypeptide reads, in one-letter code: Glutamyl-tRNA reductase (432 aa).

Substrate is bound by residues 55–58 (TCNR), serine 114, 119–121 (ETQ), and glutamine 125. Residue cysteine 56 is the Nucleophile of the active site. An NADP(+)-binding site is contributed by 194–199 (GAGEMI).

This sequence belongs to the glutamyl-tRNA reductase family. In terms of assembly, homodimer.

The catalysed reaction is (S)-4-amino-5-oxopentanoate + tRNA(Glu) + NADP(+) = L-glutamyl-tRNA(Glu) + NADPH + H(+). It participates in porphyrin-containing compound metabolism; protoporphyrin-IX biosynthesis; 5-aminolevulinate from L-glutamyl-tRNA(Glu): step 1/2. Functionally, catalyzes the NADPH-dependent reduction of glutamyl-tRNA(Glu) to glutamate 1-semialdehyde (GSA). The polypeptide is Glutamyl-tRNA reductase (Burkholderia cenocepacia (strain ATCC BAA-245 / DSM 16553 / LMG 16656 / NCTC 13227 / J2315 / CF5610) (Burkholderia cepacia (strain J2315))).